The chain runs to 341 residues: RNA 3'-terminal phosphate cyclase (341 aa).

ATP-binding positions include glutamine 102 and histidine 283 to glutamine 287. Histidine 308 functions as the Tele-AMP-histidine intermediate in the catalytic mechanism.

The protein belongs to the RNA 3'-terminal cyclase family. Type 1 subfamily.

It is found in the cytoplasm. The catalysed reaction is a 3'-end 3'-phospho-ribonucleotide-RNA + ATP = a 3'-end 2',3'-cyclophospho-ribonucleotide-RNA + AMP + diphosphate. In terms of biological role, catalyzes the conversion of 3'-phosphate to a 2',3'-cyclic phosphodiester at the end of RNA. The mechanism of action of the enzyme occurs in 3 steps: (A) adenylation of the enzyme by ATP; (B) transfer of adenylate to an RNA-N3'P to produce RNA-N3'PP5'A; (C) and attack of the adjacent 2'-hydroxyl on the 3'-phosphorus in the diester linkage to produce the cyclic end product. The biological role of this enzyme is unknown but it is likely to function in some aspects of cellular RNA processing. The protein is RNA 3'-terminal phosphate cyclase of Pseudomonas aeruginosa (strain UCBPP-PA14).